Consider the following 95-residue polypeptide: Small ribosomal subunit protein uS19 (95 aa).

Belongs to the universal ribosomal protein uS19 family.

Protein S19 forms a complex with S13 that binds strongly to the 16S ribosomal RNA. This is Small ribosomal subunit protein uS19 from Coxiella burnetii (strain CbuK_Q154) (Coxiella burnetii (strain Q154)).